The primary structure comprises 366 residues: Ribosomal RNA large subunit methyltransferase M (366 aa).

S-adenosyl-L-methionine contacts are provided by residues Ser-188, 221 to 224 (CPGG), Asp-240, Asp-260, and Asp-277. Lys-306 acts as the Proton acceptor in catalysis.

Belongs to the class I-like SAM-binding methyltransferase superfamily. RNA methyltransferase RlmE family. RlmM subfamily. In terms of assembly, monomer.

It localises to the cytoplasm. The enzyme catalyses cytidine(2498) in 23S rRNA + S-adenosyl-L-methionine = 2'-O-methylcytidine(2498) in 23S rRNA + S-adenosyl-L-homocysteine + H(+). Its function is as follows. Catalyzes the 2'-O-methylation at nucleotide C2498 in 23S rRNA. This Shigella boydii serotype 4 (strain Sb227) protein is Ribosomal RNA large subunit methyltransferase M.